The primary structure comprises 508 residues: Glycerol kinase (508 aa).

Position 14 (threonine 14) interacts with ADP. ATP-binding residues include threonine 14, threonine 15, and serine 16. Threonine 14 provides a ligand contact to sn-glycerol 3-phosphate. Position 18 (arginine 18) interacts with ADP. The sn-glycerol 3-phosphate site is built by arginine 84, glutamate 85, tyrosine 136, and aspartate 245. Glycerol-binding residues include arginine 84, glutamate 85, tyrosine 136, aspartate 245, and glutamine 246. ADP contacts are provided by threonine 267 and glycine 314. Positions 267, 314, and 318 each coordinate ATP. ADP is bound at residue asparagine 419.

This sequence belongs to the FGGY kinase family.

The enzyme catalyses glycerol + ATP = sn-glycerol 3-phosphate + ADP + H(+). The protein operates within polyol metabolism; glycerol degradation via glycerol kinase pathway; sn-glycerol 3-phosphate from glycerol: step 1/1. Inhibited by fructose 1,6-bisphosphate (FBP). Functionally, key enzyme in the regulation of glycerol uptake and metabolism. Catalyzes the phosphorylation of glycerol to yield sn-glycerol 3-phosphate. The protein is Glycerol kinase of Bordetella pertussis (strain Tohama I / ATCC BAA-589 / NCTC 13251).